A 529-amino-acid chain; its full sequence is Bifunctional purine biosynthesis protein PurH (529 aa).

An MGS-like domain is found at 1–148 (MEQSFLPIRC…KNYKYVTVVV (148 aa)).

It belongs to the PurH family.

The enzyme catalyses (6R)-10-formyltetrahydrofolate + 5-amino-1-(5-phospho-beta-D-ribosyl)imidazole-4-carboxamide = 5-formamido-1-(5-phospho-D-ribosyl)imidazole-4-carboxamide + (6S)-5,6,7,8-tetrahydrofolate. The catalysed reaction is IMP + H2O = 5-formamido-1-(5-phospho-D-ribosyl)imidazole-4-carboxamide. Its pathway is purine metabolism; IMP biosynthesis via de novo pathway; 5-formamido-1-(5-phospho-D-ribosyl)imidazole-4-carboxamide from 5-amino-1-(5-phospho-D-ribosyl)imidazole-4-carboxamide (10-formyl THF route): step 1/1. It participates in purine metabolism; IMP biosynthesis via de novo pathway; IMP from 5-formamido-1-(5-phospho-D-ribosyl)imidazole-4-carboxamide: step 1/1. This chain is Bifunctional purine biosynthesis protein PurH, found in Wigglesworthia glossinidia brevipalpis.